A 232-amino-acid polypeptide reads, in one-letter code: Pyridoxal 5'-phosphate synthase subunit PdxS (232 aa).

Lys23 functions as the Schiff-base intermediate with D-ribose 5-phosphate in the catalytic mechanism. Residue Gly95 coordinates D-ribose 5-phosphate. Arg107 serves as a coordination point for D-glyceraldehyde 3-phosphate. D-ribose 5-phosphate is bound by residues Gly156 and 177–178 (GS).

It belongs to the PdxS/SNZ family. In the presence of PdxT, forms a dodecamer of heterodimers.

The catalysed reaction is aldehydo-D-ribose 5-phosphate + D-glyceraldehyde 3-phosphate + L-glutamine = pyridoxal 5'-phosphate + L-glutamate + phosphate + 3 H2O + H(+). It participates in cofactor biosynthesis; pyridoxal 5'-phosphate biosynthesis. In terms of biological role, catalyzes the formation of pyridoxal 5'-phosphate from ribose 5-phosphate (RBP), glyceraldehyde 3-phosphate (G3P) and ammonia. The ammonia is provided by the PdxT subunit. Can also use ribulose 5-phosphate and dihydroxyacetone phosphate as substrates, resulting from enzyme-catalyzed isomerization of RBP and G3P, respectively. The polypeptide is Pyridoxal 5'-phosphate synthase subunit PdxS (Clostridium novyi).